The following is a 285-amino-acid chain: uncharacterized protein (285 aa).

The Guanylate cyclase domain maps to 92 to 199 (TLLLADVEES…PTINRTARLR (108 aa)).

Belongs to the adenylyl cyclase class-4/guanylyl cyclase family.

This is an uncharacterized protein from Mycobacterium tuberculosis (strain CDC 1551 / Oshkosh).